A 316-amino-acid polypeptide reads, in one-letter code: tRNA dimethylallyltransferase (316 aa).

Position 17–24 (17–24 (GPTASGKT)) interacts with ATP. A substrate-binding site is contributed by 19-24 (TASGKT). 3 interaction with substrate tRNA regions span residues 42 to 45 (DSAL), 166 to 170 (QRLSR), and 247 to 252 (RCVGYR).

This sequence belongs to the IPP transferase family. As to quaternary structure, monomer. Requires Mg(2+) as cofactor.

It catalyses the reaction adenosine(37) in tRNA + dimethylallyl diphosphate = N(6)-dimethylallyladenosine(37) in tRNA + diphosphate. In terms of biological role, catalyzes the transfer of a dimethylallyl group onto the adenine at position 37 in tRNAs that read codons beginning with uridine, leading to the formation of N6-(dimethylallyl)adenosine (i(6)A). The polypeptide is tRNA dimethylallyltransferase (Citrobacter koseri (strain ATCC BAA-895 / CDC 4225-83 / SGSC4696)).